Consider the following 742-residue polypeptide: Phosphoribosylformylglycinamidine synthase subunit PurL (742 aa).

Residue His54 is part of the active site. The ATP site is built by Tyr57 and Lys96. Glu98 serves as a coordination point for Mg(2+). Residues 99–102 (SHNH) and Arg121 contribute to the substrate site. His100 functions as the Proton acceptor in the catalytic mechanism. A Mg(2+)-binding site is contributed by Asp122. A substrate-binding site is contributed by Gln245. Asp273 contacts Mg(2+). Residue 317-319 (ESQ) coordinates substrate. Residues Asp500 and Gly537 each coordinate ATP. Asn538 is a Mg(2+) binding site. Ser540 contributes to the substrate binding site.

It belongs to the FGAMS family. Monomer. Part of the FGAM synthase complex composed of 1 PurL, 1 PurQ and 2 PurS subunits.

It is found in the cytoplasm. The catalysed reaction is N(2)-formyl-N(1)-(5-phospho-beta-D-ribosyl)glycinamide + L-glutamine + ATP + H2O = 2-formamido-N(1)-(5-O-phospho-beta-D-ribosyl)acetamidine + L-glutamate + ADP + phosphate + H(+). Its pathway is purine metabolism; IMP biosynthesis via de novo pathway; 5-amino-1-(5-phospho-D-ribosyl)imidazole from N(2)-formyl-N(1)-(5-phospho-D-ribosyl)glycinamide: step 1/2. In terms of biological role, part of the phosphoribosylformylglycinamidine synthase complex involved in the purines biosynthetic pathway. Catalyzes the ATP-dependent conversion of formylglycinamide ribonucleotide (FGAR) and glutamine to yield formylglycinamidine ribonucleotide (FGAM) and glutamate. The FGAM synthase complex is composed of three subunits. PurQ produces an ammonia molecule by converting glutamine to glutamate. PurL transfers the ammonia molecule to FGAR to form FGAM in an ATP-dependent manner. PurS interacts with PurQ and PurL and is thought to assist in the transfer of the ammonia molecule from PurQ to PurL. This chain is Phosphoribosylformylglycinamidine synthase subunit PurL, found in Bacillus velezensis (strain DSM 23117 / BGSC 10A6 / LMG 26770 / FZB42) (Bacillus amyloliquefaciens subsp. plantarum).